The chain runs to 634 residues: Chaperone protein DnaK (634 aa).

Thr198 carries the phosphothreonine; by autocatalysis modification. Residues 599-634 (KQTQEGAEAASEAGEQSAGDEGVVDAEFEEVDEQNK) are disordered. Over residues 602-619 (QEGAEAASEAGEQSAGDE) the composition is skewed to low complexity. Positions 620–634 (GVVDAEFEEVDEQNK) are enriched in acidic residues.

Belongs to the heat shock protein 70 family.

Acts as a chaperone. The sequence is that of Chaperone protein DnaK from Syntrophotalea carbinolica (strain DSM 2380 / NBRC 103641 / GraBd1) (Pelobacter carbinolicus).